We begin with the raw amino-acid sequence, 590 residues long: Urease subunit alpha (590 aa).

One can recognise a Urease domain in the interval 134–590; it reads GGIDSHIHFI…LPLAQRYFLF (457 aa). H139, H141, and K222 together coordinate Ni(2+). K222 carries the N6-carboxylysine modification. Residue H224 coordinates substrate. Positions 251 and 277 each coordinate Ni(2+). The active-site Proton donor is the H325. D365 lines the Ni(2+) pocket. A disordered region spans residues 388–416; sequence QQRGWLSPPAAGQGAGLSSAAGQGVDHDT. Residues 393-411 show a composition bias toward low complexity; that stretch reads LSPPAAGQGAGLSSAAGQG.

It belongs to the metallo-dependent hydrolases superfamily. Urease alpha subunit family. In terms of assembly, heterotrimer of UreA (gamma), UreB (beta) and UreC (alpha) subunits. Three heterotrimers associate to form the active enzyme. Ni cation serves as cofactor. In terms of processing, carboxylation allows a single lysine to coordinate two nickel ions.

It localises to the cytoplasm. It carries out the reaction urea + 2 H2O + H(+) = hydrogencarbonate + 2 NH4(+). Its pathway is nitrogen metabolism; urea degradation; CO(2) and NH(3) from urea (urease route): step 1/1. The chain is Urease subunit alpha from Verminephrobacter eiseniae (strain EF01-2).